The chain runs to 172 residues: C-phycocyanin subunit beta (172 aa).

Asparagine 72 is subject to N4-methylasparagine. Cysteine 82 and cysteine 153 together coordinate (2R,3E)-phycocyanobilin.

The protein belongs to the phycobiliprotein family. In terms of assembly, heterodimer of an alpha and a beta subunit, which further assembles into trimers and the trimers into hexamers. Post-translationally, contains two covalently linked bilin chromophores. The chromophore on position 82 is added by the phycocyanobilin lyase CpcUS, while the chromophore on position 153 is added by the phycocyanobilin lyase CpcT.

It localises to the cellular thylakoid membrane. Its function is as follows. Light-harvesting photosynthetic bile pigment-protein from the phycobiliprotein complex (phycobilisome, PBS). Phycocyanin is the major phycobiliprotein in the PBS rod. In Picosynechococcus sp. (strain ATCC 27264 / PCC 7002 / PR-6) (Agmenellum quadruplicatum), this protein is C-phycocyanin subunit beta (cpcB).